Consider the following 394-residue polypeptide: GDP-mannose transporter (394 aa).

Residues 1–56 (MSNKKNEDIEMRAVEGANDFGGEKDPFLGRNSPVLRPRGREPTASAYFGKLDNSPG) lie on the Cytoplasmic side of the membrane. The helical transmembrane segment at 57–77 (ASIIAYCLSSISMTVVNKYVV) threads the bilayer. Residues 78-81 (SGES) lie on the Lumenal side of the membrane. Residues 82–102 (WNLNFFYLGVQSLVCTIAILL) form a helical membrane-spanning segment. The Cytoplasmic segment spans residues 103 to 122 (SRQTGLIKNLAPFDSNKAKR). The helical transmembrane segment at 123-145 (WFPVSLLLVSMIYTGANALQYLS) threads the bilayer. Over 146-150 (VPVYT) the chain is Lumenal. A helical membrane pass occupies residues 151–168 (IFKNLTIIVIAYGEVLWF). The Cytoplasmic portion of the chain corresponds to 169-174 (GGSVTP). The helical transmembrane segment at 175–199 (LMLLSFGLMVLSSVVAAWADIQAAI) threads the bilayer. Residues 200-207 (DGVGHSAE) lie on the Lumenal side of the membrane. Residues 208 to 228 (TSAALATLNAGYAWMGLNVVC) form a helical membrane-spanning segment. The Cytoplasmic portion of the chain corresponds to 229–249 (TSSYLLGMRKVIKKMNFKDYD). Residues 250–270 (SMFYNNLLTIPVLVVCSLLVE) form a helical membrane-spanning segment. Topologically, residues 271–288 (DWSSENLAKNFPIETRNK) are lumenal. A helical membrane pass occupies residues 289-309 (LMVGMIYSGLAAIFISYCSAW). At 310–317 (CIRVTSST) the chain is on the cytoplasmic side. A helical membrane pass occupies residues 318–338 (TYSMVGALNKLPIAISGLIFF). Residues 339–341 (DAP) are Lumenal-facing. The helical transmembrane segment at 342–362 (ITFGSITAIAVGFVSGLVFAW) threads the bilayer. The Cytoplasmic portion of the chain corresponds to 363–394 (AKVRQKAQEAGLLPTTKPTMSASAQSNRDANS).

It belongs to the TPT transporter family. SLC35D subfamily. Homooligomer.

The protein resides in the golgi apparatus membrane. It localises to the cytoplasmic vesicle membrane. The protein localises to the endoplasmic reticulum membrane. In terms of biological role, involved in the import of GDP-mannose from the cytoplasm into the Golgi lumen. This Chaetomium globosum (strain ATCC 6205 / CBS 148.51 / DSM 1962 / NBRC 6347 / NRRL 1970) (Soil fungus) protein is GDP-mannose transporter (VRG4).